Here is a 49-residue protein sequence, read N- to C-terminus: MAVPKRRVSKTRAAKRRTHYKIKLVKPVKDKDGTWKLPHHVNPTTGEYK.

This sequence belongs to the bacterial ribosomal protein bL32 family.

This chain is Large ribosomal subunit protein bL32, found in Nitratiruptor sp. (strain SB155-2).